The chain runs to 144 residues: Histone H3.1 (144 aa).

Positions 1–45 (MARTKQSARKTTGGKAPRKQLSAKSARKGVSPASSAGAKKSRYRP) are disordered. Lysine 5 carries the post-translational modification N6,N6,N6-trimethyllysine; alternate. Position 5 is an N6,N6-dimethyllysine; alternate (lysine 5). N6-methyllysine; alternate occurs at positions 5 and 10. N6-acetyllysine; alternate occurs at positions 10, 15, 19, 24, 28, and 39. Position 15 is an N6,N6-dimethyllysine; alternate (lysine 15). N6-methyllysine; alternate occurs at positions 19, 24, 28, and 39. N6,N6,N6-trimethyllysine; alternate is present on residues lysine 28 and lysine 39. Residues lysine 28 and lysine 39 each carry the N6,N6-dimethyllysine; alternate modification. The residue at position 58 (lysine 58) is an N6-acetyllysine.

This sequence belongs to the histone H3 family. In terms of assembly, the nucleosome is a histone octamer containing two molecules each of H2A, H2B, H3 and H4 assembled in one H3-H4 heterotetramer and two H2A-H2B heterodimers. The octamer wraps approximately 147 bp of DNA. Mono-, di- and trimethylated to form H3K4me1/2/3. H3K4me activates gene expression by regulating transcription elongation and plays a role in telomere length maintenance. H3K4me enrichment correlates with transcription levels, and occurs in a 5' to 3' gradient with H3K4me3 enrichment at the 5'-end of genes, shifting to H3K4me2 and then H3K4me1. H3K36me represses gene expression. Post-translationally, acetylation of histone H3 leads to transcriptional activation.

The protein resides in the nucleus. Its subcellular location is the chromosome. In terms of biological role, core component of nucleosome. Nucleosomes wrap and compact DNA into chromatin, limiting DNA accessibility to the cellular machineries which require DNA as a template. Histones thereby play a central role in transcription regulation, DNA repair, DNA replication and chromosomal stability. DNA accessibility is regulated via a complex set of post-translational modifications of histones, also called histone code, and nucleosome remodeling. This Encephalitozoon cuniculi (strain GB-M1) (Microsporidian parasite) protein is Histone H3.1 (HHT1).